The primary structure comprises 211 residues: Large ribosomal subunit protein uL4 (211 aa).

The tract at residues 41 to 87 (QAHARQGTASTLTRSEVRGGGRKPYKQKGTGRARQGSIRTPLRPGGG) is disordered. Over residues 60–71 (GGRKPYKQKGTG) the composition is skewed to basic residues.

This sequence belongs to the universal ribosomal protein uL4 family. As to quaternary structure, part of the 50S ribosomal subunit.

In terms of biological role, one of the primary rRNA binding proteins, this protein initially binds near the 5'-end of the 23S rRNA. It is important during the early stages of 50S assembly. It makes multiple contacts with different domains of the 23S rRNA in the assembled 50S subunit and ribosome. Its function is as follows. Forms part of the polypeptide exit tunnel. This chain is Large ribosomal subunit protein uL4, found in Parasynechococcus marenigrum (strain WH8102).